A 109-amino-acid chain; its full sequence is MTETEFLALVDQVLDSIESQADDWAAGLDVDIEATRSGNVLTLVFEDGTQVVVNAQAAMQELWVAARSGGFHYRYDGQHWNDTRGGPRLPDALSQICSEAAGVPVSVRL.

The protein belongs to the frataxin family.

Functionally, involved in iron-sulfur (Fe-S) cluster assembly. May act as a regulator of Fe-S biogenesis. The protein is Iron-sulfur cluster assembly protein CyaY of Bordetella bronchiseptica (strain ATCC BAA-588 / NCTC 13252 / RB50) (Alcaligenes bronchisepticus).